Consider the following 238-residue polypeptide: MRLDQRALDQLRDVKITRNYTRYAEGSVLVEFGHTKVLCTASIDNSVPRFLKGQGQGWVTAEYGMLPRSTHTRSDREAARGKQTGRTQEIQRLIGRSLRAMVDLKKLGENTITIDCDVIQADGGTRTAAITGAAVALIDAMNVLLEKKKIKQDPLKGLVAAISVGIYQDEVLLDLCYEEDSNCQTDLNVVMTQAGEFIEIQGTAEEKPFTRTQANAMLEVAEKGIQELIKKQQQALGW.

Phosphate contacts are provided by residues arginine 86 and 124 to 126 (GTR).

Belongs to the RNase PH family. Homohexameric ring arranged as a trimer of dimers.

It carries out the reaction tRNA(n+1) + phosphate = tRNA(n) + a ribonucleoside 5'-diphosphate. Phosphorolytic 3'-5' exoribonuclease that plays an important role in tRNA 3'-end maturation. Removes nucleotide residues following the 3'-CCA terminus of tRNAs; can also add nucleotides to the ends of RNA molecules by using nucleoside diphosphates as substrates, but this may not be physiologically important. Probably plays a role in initiation of 16S rRNA degradation (leading to ribosome degradation) during starvation. The chain is Ribonuclease PH from Acinetobacter baylyi (strain ATCC 33305 / BD413 / ADP1).